Here is a 117-residue protein sequence, read N- to C-terminus: Large ribosomal subunit protein bL19 (117 aa).

This sequence belongs to the bacterial ribosomal protein bL19 family.

In terms of biological role, this protein is located at the 30S-50S ribosomal subunit interface and may play a role in the structure and function of the aminoacyl-tRNA binding site. The sequence is that of Large ribosomal subunit protein bL19 from Aliivibrio salmonicida (strain LFI1238) (Vibrio salmonicida (strain LFI1238)).